The chain runs to 152 residues: MNKPVTLLLATLLAPLSGQLCAQESVTMDGKQYSTIEVNGQTYLIPDNGSKKRVARSLDSKVPQQTLRRGDVLMQGAASPELTVSGTLLVEADDASAKALATRHGLNFKQSSGGIALLEAKPGTDLNAIATKLKSEGVNVQIELSGAEQQPK.

The N-terminal stretch at methionine 1–alanine 22 is a signal peptide.

As to quaternary structure, forms a complex with the serine protease ASP in the periplasm. After translocation of the ASP-ORF2 complex from the periplasm to the extracellular space, the complex is dissociated in a pH-dependent manner.

Its subcellular location is the periplasm. The protein resides in the secreted. With respect to regulation, degraded by ASP after secretion and dissociation of the ASP-ORF2 complex. Required for the production of the active form of the Aeromonas extracellular serine protease (ASP). Acts as a chaperone that helps ASP form an active structure in the periplasm. Formation of a complex with ASP in the periplasm also inactivates the protease activity and likely protects ASP from intrinsic proteases. Dissociation of the ASP-ORF2 complex after secretion in the extracellular space generates an active ASP. The sequence is that of ASP external chaperone from Aeromonas sobria.